The sequence spans 225 residues: Mitochondrial inner membrane protease ATP23 (225 aa).

His-124 serves as a coordination point for a divalent metal cation. Glu-125 is an active-site residue. His-128 provides a ligand contact to a divalent metal cation.

Belongs to the peptidase M76 family.

The protein resides in the mitochondrion inner membrane. In terms of biological role, has a dual role in the assembly of mitochondrial ATPase. Acts as a protease that removes N-terminal residues of mitochondrial ATPase CF(0) subunit 6 at the intermembrane space side. Also involved in the correct assembly of the membrane-embedded ATPase CF(0) particle, probably mediating association of subunit 6 with the subunit 9 ring. The polypeptide is Mitochondrial inner membrane protease ATP23 (ATP23) (Candida glabrata (strain ATCC 2001 / BCRC 20586 / JCM 3761 / NBRC 0622 / NRRL Y-65 / CBS 138) (Yeast)).